Consider the following 446-residue polypeptide: Glutamate--tRNA ligase 2 (446 aa).

Residues 8 to 18 carry the 'HIGH' region motif; that stretch reads PSPTGYLHIGN. The short motif at 239 to 243 is the 'KMSKS' region element; the sequence is GLSKR. ATP is bound at residue K242.

It belongs to the class-I aminoacyl-tRNA synthetase family. Glutamate--tRNA ligase type 1 subfamily. As to quaternary structure, monomer.

Its subcellular location is the cytoplasm. It catalyses the reaction tRNA(Glu) + L-glutamate + ATP = L-glutamyl-tRNA(Glu) + AMP + diphosphate. Its function is as follows. Catalyzes the attachment of glutamate to tRNA(Glu) in a two-step reaction: glutamate is first activated by ATP to form Glu-AMP and then transferred to the acceptor end of tRNA(Glu). This is Glutamate--tRNA ligase 2 from Methylobacterium radiotolerans (strain ATCC 27329 / DSM 1819 / JCM 2831 / NBRC 15690 / NCIMB 10815 / 0-1).